A 266-amino-acid chain; its full sequence is Glucosamine-6-phosphate deaminase (266 aa).

Catalysis depends on aspartate 72, which acts as the Proton acceptor; for enolization step. The active-site For ring-opening step is aspartate 141. Residue histidine 143 is the Proton acceptor; for ring-opening step of the active site. Glutamate 148 acts as the For ring-opening step in catalysis.

It belongs to the glucosamine/galactosamine-6-phosphate isomerase family. NagB subfamily. As to quaternary structure, homohexamer; trimer of disulfide-linked dimers.

It catalyses the reaction alpha-D-glucosamine 6-phosphate + H2O = beta-D-fructose 6-phosphate + NH4(+). It participates in amino-sugar metabolism; N-acetylneuraminate degradation; D-fructose 6-phosphate from N-acetylneuraminate: step 5/5. With respect to regulation, allosterically activated by N-acetylglucosamine 6-phosphate (GlcNAc6P). Functionally, catalyzes the reversible isomerization-deamination of glucosamine 6-phosphate (GlcN6P) to form fructose 6-phosphate (Fru6P) and ammonium ion. The protein is Glucosamine-6-phosphate deaminase of Shigella dysenteriae serotype 1 (strain Sd197).